We begin with the raw amino-acid sequence, 347 residues long: S-adenosylmethionine:tRNA ribosyltransferase-isomerase (347 aa).

The protein belongs to the QueA family. As to quaternary structure, monomer.

The protein resides in the cytoplasm. The enzyme catalyses 7-aminomethyl-7-carbaguanosine(34) in tRNA + S-adenosyl-L-methionine = epoxyqueuosine(34) in tRNA + adenine + L-methionine + 2 H(+). It participates in tRNA modification; tRNA-queuosine biosynthesis. Transfers and isomerizes the ribose moiety from AdoMet to the 7-aminomethyl group of 7-deazaguanine (preQ1-tRNA) to give epoxyqueuosine (oQ-tRNA). This is S-adenosylmethionine:tRNA ribosyltransferase-isomerase from Xylella fastidiosa (strain M12).